Here is a 734-residue protein sequence, read N- to C-terminus: Photosystem I P700 chlorophyll a apoprotein A2 (734 aa).

The next 8 membrane-spanning stretches (helical) occupy residues 46–69, 135–158, 175–199, 273–291, 330–353, 369–395, 417–439, and 517–535; these read IFAS…FHVA, LYTG…LHLQ, LNHH…HVAI, MAHH…GHMY, IHFQ…QHMY, AALY…IFFI, AIIS…LYVH, and FLVH…LILV. 2 residues coordinate [4Fe-4S] cluster: Cys559 and Cys568. 2 consecutive transmembrane segments (helical) span residues 575 to 596 and 643 to 665; these read AFYL…YWHW and LSVW…MFLI. Residues His654, Met662, and Tyr670 each coordinate chlorophyll a. Residue Trp671 coordinates phylloquinone. Residues 707 to 727 traverse the membrane as a helical segment; it reads LVGLAHFSVGYIFTYAAFLIA.

It belongs to the PsaA/PsaB family. The PsaA/B heterodimer binds the P700 chlorophyll special pair and subsequent electron acceptors. PSI consists of a core antenna complex that captures photons, and an electron transfer chain that converts photonic excitation into a charge separation. The eukaryotic PSI reaction center is composed of at least 11 subunits. P700 is a chlorophyll a/chlorophyll a' dimer, A0 is one or more chlorophyll a, A1 is one or both phylloquinones and FX is a shared 4Fe-4S iron-sulfur center. serves as cofactor.

The protein localises to the plastid. The protein resides in the chloroplast thylakoid membrane. The catalysed reaction is reduced [plastocyanin] + hnu + oxidized [2Fe-2S]-[ferredoxin] = oxidized [plastocyanin] + reduced [2Fe-2S]-[ferredoxin]. In terms of biological role, psaA and PsaB bind P700, the primary electron donor of photosystem I (PSI), as well as the electron acceptors A0, A1 and FX. PSI is a plastocyanin-ferredoxin oxidoreductase, converting photonic excitation into a charge separation, which transfers an electron from the donor P700 chlorophyll pair to the spectroscopically characterized acceptors A0, A1, FX, FA and FB in turn. Oxidized P700 is reduced on the lumenal side of the thylakoid membrane by plastocyanin. The polypeptide is Photosystem I P700 chlorophyll a apoprotein A2 (Helianthus annuus (Common sunflower)).